Consider the following 285-residue polypeptide: Baculoviral IAP repeat-containing protein 7 (285 aa).

A disordered region spans residues 18–47 (ESRARDSVRGPELSHREDGSGRTQEQDKPH). Over residues 19–47 (SRARDSVRGPELSHREDGSGRTQEQDKPH) the composition is skewed to basic and acidic residues. The BIR repeat unit spans residues 96-161 (RLASFYDWPS…RWFPRCQFLL (66 aa)). 4 residues coordinate Zn(2+): C130, C133, H150, and C157. Positions 184-225 (QREEPEDAVSATPSAPAHGSPELLRSRRETQPEDVSEPGAKD) are disordered. Residues 239 to 273 (CKVCLDRAVSIVFVPCGHFVCTECAPNLQLCPICR) form an RING-type zinc finger.

It belongs to the IAP family. Binds to caspase-9. Interaction with DIABLO/SMAC via the BIR domain disrupts binding to caspase-9 and apoptotic suppressor activity. Interacts with TAB1. In vitro, interacts with caspase-3 and caspase-7 via its BIR domain. Autoubiquitinated and undergoes proteasome-mediated degradation. Post-translationally, the truncated protein (tLivin) not only loses its anti-apoptotic effect but also acquires a pro-apoptotic effect.

It is found in the nucleus. Its subcellular location is the cytoplasm. The protein localises to the golgi apparatus. The catalysed reaction is S-ubiquitinyl-[E2 ubiquitin-conjugating enzyme]-L-cysteine + [acceptor protein]-L-lysine = [E2 ubiquitin-conjugating enzyme]-L-cysteine + N(6)-ubiquitinyl-[acceptor protein]-L-lysine.. Apoptotic regulator capable of exerting proapoptotic and anti-apoptotic activities and plays crucial roles in apoptosis, cell proliferation, and cell cycle control. Its anti-apoptotic activity is mediated through the inhibition of CASP3, CASP7 and CASP9, as well as by its E3 ubiquitin-protein ligase activity. As it is a weak caspase inhibitor, its anti-apoptotic activity is thought to be due to its ability to ubiquitinate DIABLO/SMAC targeting it for degradation thereby promoting cell survival. May contribute to caspase inhibition, by blocking the ability of DIABLO/SMAC to disrupt XIAP/BIRC4-caspase interactions. Protects against apoptosis induced by TNF or by chemical agents such as adriamycin, etoposide or staurosporine. Suppression of apoptosis is mediated by activation of MAPK8/JNK1, and possibly also of MAPK9/JNK2. This activation depends on TAB1 and MAP3K7/TAK1. In vitro, inhibits CASP3 and proteolytic activation of pro-CASP9. This Mus musculus (Mouse) protein is Baculoviral IAP repeat-containing protein 7 (Birc7).